We begin with the raw amino-acid sequence, 83 residues long: U20-theraphotoxin-Cg1a 2 (83 aa).

The N-terminal stretch at 1–21 (MQVSVLITLAVLGVMFVWTSA) is a signal peptide. A propeptide spanning residues 22–47 (AELEERGSDQPAWLKSLERIFQSEER) is cleaved from the precursor. Disulfide bonds link C49-C63, C56-C68, and C62-C76.

This sequence belongs to the neurotoxin 10 (Hwtx-1) family. 40 (Jztx-35) subfamily. Expressed by the venom gland.

It is found in the secreted. Its function is as follows. Probable ion channel inhibitor. The sequence is that of U20-theraphotoxin-Cg1a 2 from Chilobrachys guangxiensis (Chinese earth tiger tarantula).